The following is a 276-amino-acid chain: Urease accessory protein UreD (276 aa).

Belongs to the UreD family. As to quaternary structure, ureD, UreF and UreG form a complex that acts as a GTP-hydrolysis-dependent molecular chaperone, activating the urease apoprotein by helping to assemble the nickel containing metallocenter of UreC. The UreE protein probably delivers the nickel.

Its subcellular location is the cytoplasm. In terms of biological role, required for maturation of urease via the functional incorporation of the urease nickel metallocenter. This chain is Urease accessory protein UreD, found in Polaromonas naphthalenivorans (strain CJ2).